Consider the following 723-residue polypeptide: Lim and transglutaminase domain protein ltd-1 (723 aa).

The LIM zinc-binding domain occupies 5 to 72; the sequence is QHCNRCGKQV…SNHVPIAGPH (68 aa).

This sequence belongs to the transglutaminase-like superfamily. As to expression, expressed in the Y and U rectal epithelial cells, in marginal cells of the terminal bulb and isthmus of the pharynx (at protein level).

Its subcellular location is the cytoplasm. The protein localises to the cytoskeleton. Cytoskeleton-associated protein. May play a role in hypodermal cell development. The protein is Lim and transglutaminase domain protein ltd-1 of Caenorhabditis elegans.